Here is a 260-residue protein sequence, read N- to C-terminus: Creatinine amidohydrolase (260 aa).

E34 lines the Mn(2+) pocket. Residues E34, H36, and D45 each contribute to the Zn(2+) site. D45 contacts Mn(2+). S78 provides a ligand contact to creatine. H120 is a binding site for Mn(2+). H120 serves as a coordination point for Zn(2+). Positions 121, 174, 175, and 178 each coordinate creatine. E183 serves as a coordination point for Zn(2+).

This sequence belongs to the creatininase superfamily. In terms of assembly, homohexamer; trimer of dimers. Requires Zn(2+) as cofactor. Mn(2+) is required as a cofactor.

The catalysed reaction is creatinine + H2O = creatine. It functions in the pathway amine and polyamine degradation; creatinine degradation. Its activity is regulated as follows. Is markedly inactivated in vitro by heavy metal ions, N-bromosuccinimide, ethoxyformic anhydride, and dye-sensitized photooxidation. In terms of biological role, cyclic amidohydrolase that catalyzes the reversible conversion of creatinine to creatine. Is also active toward glycocyamidine, though the reaction rate is very low, but it is completely inert toward hydantoin and its derivatives. This chain is Creatinine amidohydrolase (crnA), found in Pseudomonas putida (Arthrobacter siderocapsulatus).